The chain runs to 444 residues: Methylenetetrahydrofolate--tRNA-(uracil-5-)-methyltransferase TrmFO (444 aa).

An FAD-binding site is contributed by 10–15; the sequence is GAGLAG.

Belongs to the MnmG family. TrmFO subfamily. Requires FAD as cofactor.

The protein localises to the cytoplasm. It carries out the reaction uridine(54) in tRNA + (6R)-5,10-methylene-5,6,7,8-tetrahydrofolate + NADH + H(+) = 5-methyluridine(54) in tRNA + (6S)-5,6,7,8-tetrahydrofolate + NAD(+). It catalyses the reaction uridine(54) in tRNA + (6R)-5,10-methylene-5,6,7,8-tetrahydrofolate + NADPH + H(+) = 5-methyluridine(54) in tRNA + (6S)-5,6,7,8-tetrahydrofolate + NADP(+). Functionally, catalyzes the folate-dependent formation of 5-methyl-uridine at position 54 (M-5-U54) in all tRNAs. This Streptococcus pneumoniae (strain ATCC 700669 / Spain 23F-1) protein is Methylenetetrahydrofolate--tRNA-(uracil-5-)-methyltransferase TrmFO.